Consider the following 637-residue polypeptide: ATP-dependent zinc metalloprotease FtsH (637 aa).

Residues 1-6 lie on the Cytoplasmic side of the membrane; it reads MNNQGR. The helical transmembrane segment at 7–27 threads the bilayer; sequence SILAWAALFIFVILLFNVFQS. The Periplasmic segment spans residues 28-103; that stretch reads DGLLGVRNNI…VVPLETRMNT (76 aa). A helical membrane pass occupies residues 104–124; sequence FLGFLISWFPMLLLIGVWVFF. Over 125-637 the chain is Cytoplasmic; that stretch reads MRQMHGGGKA…TKAQKENIAS (513 aa). Residue 195–202 coordinates ATP; sequence GPPGTGKT. Position 417 (His417) interacts with Zn(2+). Residue Glu418 is part of the active site. Zn(2+) contacts are provided by His421 and Asp495. The segment at 617–637 is disordered; the sequence is DKEKLHEKTKTTKAQKENIAS.

In the central section; belongs to the AAA ATPase family. This sequence in the C-terminal section; belongs to the peptidase M41 family. As to quaternary structure, homohexamer. It depends on Zn(2+) as a cofactor.

The protein localises to the cell inner membrane. Its function is as follows. Acts as a processive, ATP-dependent zinc metallopeptidase for both cytoplasmic and membrane proteins. Plays a role in the quality control of integral membrane proteins. The chain is ATP-dependent zinc metalloprotease FtsH from Rickettsia typhi (strain ATCC VR-144 / Wilmington).